Consider the following 208-residue polypeptide: FMN-dependent NADH:quinone oxidoreductase 1 (208 aa).

17–19 (SVS) contacts FMN.

Belongs to the azoreductase type 1 family. Homodimer. It depends on FMN as a cofactor.

It catalyses the reaction 2 a quinone + NADH + H(+) = 2 a 1,4-benzosemiquinone + NAD(+). The enzyme catalyses N,N-dimethyl-1,4-phenylenediamine + anthranilate + 2 NAD(+) = 2-(4-dimethylaminophenyl)diazenylbenzoate + 2 NADH + 2 H(+). Functionally, quinone reductase that provides resistance to thiol-specific stress caused by electrophilic quinones. Also exhibits azoreductase activity. Catalyzes the reductive cleavage of the azo bond in aromatic azo compounds to the corresponding amines. The protein is FMN-dependent NADH:quinone oxidoreductase 1 of Listeria monocytogenes serotype 4b (strain F2365).